A 313-amino-acid chain; its full sequence is Curved DNA-binding protein (313 aa).

Residues D5–G69 enclose the J domain. Residues G71–V93 form a disordered region.

It is found in the cytoplasm. The protein localises to the nucleoid. DNA-binding protein that preferentially recognizes a curved DNA sequence. It is probably a functional analog of DnaJ; displays overlapping activities with DnaJ, but functions under different conditions, probably acting as a molecular chaperone in an adaptive response to environmental stresses other than heat shock. Lacks autonomous chaperone activity; binds native substrates and targets them for recognition by DnaK. Its activity is inhibited by the binding of CbpM. The chain is Curved DNA-binding protein from Coxiella burnetii (strain Dugway 5J108-111).